The chain runs to 213 residues: Probable nicotinate-nucleotide adenylyltransferase (213 aa).

The protein belongs to the NadD family.

The enzyme catalyses nicotinate beta-D-ribonucleotide + ATP + H(+) = deamido-NAD(+) + diphosphate. It functions in the pathway cofactor biosynthesis; NAD(+) biosynthesis; deamido-NAD(+) from nicotinate D-ribonucleotide: step 1/1. In terms of biological role, catalyzes the reversible adenylation of nicotinate mononucleotide (NaMN) to nicotinic acid adenine dinucleotide (NaAD). This is Probable nicotinate-nucleotide adenylyltransferase from Escherichia coli O17:K52:H18 (strain UMN026 / ExPEC).